Consider the following 189-residue polypeptide: Probable nicotinate-nucleotide adenylyltransferase (189 aa).

It belongs to the NadD family.

The enzyme catalyses nicotinate beta-D-ribonucleotide + ATP + H(+) = deamido-NAD(+) + diphosphate. It functions in the pathway cofactor biosynthesis; NAD(+) biosynthesis; deamido-NAD(+) from nicotinate D-ribonucleotide: step 1/1. Functionally, catalyzes the reversible adenylation of nicotinate mononucleotide (NaMN) to nicotinic acid adenine dinucleotide (NaAD). The protein is Probable nicotinate-nucleotide adenylyltransferase of Caulobacter sp. (strain K31).